A 121-amino-acid polypeptide reads, in one-letter code: Dihydroneopterin aldolase (121 aa).

Residues glutamate 22, tyrosine 54, and 73 to 74 (LE) contribute to the substrate site. The active-site Proton donor/acceptor is the lysine 100.

This sequence belongs to the DHNA family. In terms of assembly, homooctamer. Four molecules assemble into a ring, and two rings come together to give a cylinder with a hole of at least 13 a diameter.

It catalyses the reaction 7,8-dihydroneopterin = 6-hydroxymethyl-7,8-dihydropterin + glycolaldehyde. The catalysed reaction is 7,8-dihydroneopterin = 7,8-dihydromonapterin. Its pathway is cofactor biosynthesis; tetrahydrofolate biosynthesis; 2-amino-4-hydroxy-6-hydroxymethyl-7,8-dihydropteridine diphosphate from 7,8-dihydroneopterin triphosphate: step 3/4. In terms of biological role, catalyzes the conversion of 7,8-dihydroneopterin to 6-hydroxymethyl-7,8-dihydropterin. Can also catalyze the epimerization of carbon 2' of dihydroneopterin to dihydromonapterin. This is Dihydroneopterin aldolase (folB) from Staphylococcus aureus (strain COL).